We begin with the raw amino-acid sequence, 108 residues long: Large ribosomal subunit protein uL24 (108 aa).

The protein belongs to the universal ribosomal protein uL24 family. As to quaternary structure, part of the 50S ribosomal subunit.

In terms of biological role, one of two assembly initiator proteins, it binds directly to the 5'-end of the 23S rRNA, where it nucleates assembly of the 50S subunit. One of the proteins that surrounds the polypeptide exit tunnel on the outside of the subunit. In Trichlorobacter lovleyi (strain ATCC BAA-1151 / DSM 17278 / SZ) (Geobacter lovleyi), this protein is Large ribosomal subunit protein uL24.